The following is a 249-amino-acid chain: Inhibitor of growth protein 4 (249 aa).

Residues 25-118 (FQLMRDLDQR…ADLKEKQIES (94 aa)) adopt a coiled-coil conformation. N6-acetyllysine occurs at positions 112, 127, and 129. The disordered stretch occupies residues 115-163 (QIESSDYDSSSSKGKKKGRTQKEKKAARARSKGKNSDEEAPKAAQKKLK). Positions 127–148 (KGKKKGRTQKEKKAARARSKGK) match the Bipartite nuclear localization signal motif. Arg-133 is modified (citrulline). Residues Lys-146, Lys-148, and Lys-156 each carry the N6-acetyllysine modification. Arg-166 carries the citrulline modification. The PHD-type zinc-finger motif lies at 196–245 (PTYCLCHQVSYGEMIGCDNPDCSIEWFHFACVGLTTKPRGKWFCPRCSQE). Zn(2+)-binding residues include Cys-199, Cys-201, Cys-212, Cys-217, His-223, Cys-226, Cys-239, and Cys-242.

Belongs to the ING family. As to quaternary structure, homodimer. Component of the HBO1 complex composed of KAT7/HBO1, MEAF6, ING4 or ING5, and one scaffold subunit: complexes containing BRPF scaffold (BRPF1, BRD1/BRPF2 or BRPF3) direct KAT7/HBO1 specificity towards H3K14ac, while complexes containing JADE scaffold (JADE1, JADE2 and JADE3) mediate acetylation of histone H4. Interacts with H3K4me3 and to a lesser extent with H3K4me2, the interaction augments KAT7/HBO1 acetylation activity on H3 tails. Interacts with EP300, RELA and TP53; these interactions may be indirect. Interacts with EGLN1. In terms of assembly, interacts with BCL2A1. In terms of processing, citrullination by PADI4 within the nuclear localization signal disrupts the interaction with p53 and increases susceptibility to degradation. As to expression, isoform 2, isoform 3, isoform 4 and isoform 5 are expressed in the mammary gland, ovary, spleen and muscle. Expressed in the mammary gland, ovary, spleen and muscle.

It localises to the nucleus. In terms of biological role, component of HBO1 complexes, which specifically mediate acetylation of histone H3 at 'Lys-14' (H3K14ac), and have reduced activity toward histone H4. Through chromatin acetylation it may function in DNA replication. May inhibit tumor progression by modulating the transcriptional output of signaling pathways which regulate cell proliferation. Can suppress brain tumor angiogenesis through transcriptional repression of RELA/NFKB3 target genes when complexed with RELA. May also specifically suppress loss of contact inhibition elicited by activated oncogenes such as MYC. Represses hypoxia inducible factor's (HIF) activity by interacting with HIF prolyl hydroxylase 2 (EGLN1). Can enhance apoptosis induced by serum starvation in mammary epithelial cell line HC11. The protein is Inhibitor of growth protein 4 (Ing4) of Mus musculus (Mouse).